The following is a 305-amino-acid chain: UDP-N-acetylenolpyruvoylglucosamine reductase (305 aa).

The FAD-binding PCMH-type domain maps to 33–198 (RVGGPAQVLF…TGGTFRGRRA (166 aa)). Residue arginine 178 is part of the active site. Serine 227 (proton donor) is an active-site residue. Residue glutamate 297 is part of the active site.

Belongs to the MurB family. FAD serves as cofactor.

The protein resides in the cytoplasm. The enzyme catalyses UDP-N-acetyl-alpha-D-muramate + NADP(+) = UDP-N-acetyl-3-O-(1-carboxyvinyl)-alpha-D-glucosamine + NADPH + H(+). Its pathway is cell wall biogenesis; peptidoglycan biosynthesis. In terms of biological role, cell wall formation. In Nitrobacter hamburgensis (strain DSM 10229 / NCIMB 13809 / X14), this protein is UDP-N-acetylenolpyruvoylglucosamine reductase.